A 384-amino-acid chain; its full sequence is S-adenosylmethionine synthase (384 aa).

Histidine 15 contributes to the ATP binding site. Position 17 (aspartate 17) interacts with Mg(2+). Glutamate 43 provides a ligand contact to K(+). Residues glutamate 56 and glutamine 99 each contribute to the L-methionine site. The segment at 99–109 (QSPDINQGVDR) is flexible loop. Residues 164 to 166 (DAK), 230 to 231 (RF), aspartate 239, 245 to 246 (RK), alanine 262, and lysine 266 contribute to the ATP site. An L-methionine-binding site is contributed by aspartate 239. Lysine 270 is an L-methionine binding site.

This sequence belongs to the AdoMet synthase family. Homotetramer; dimer of dimers. It depends on Mg(2+) as a cofactor. K(+) is required as a cofactor.

Its subcellular location is the cytoplasm. The catalysed reaction is L-methionine + ATP + H2O = S-adenosyl-L-methionine + phosphate + diphosphate. It participates in amino-acid biosynthesis; S-adenosyl-L-methionine biosynthesis; S-adenosyl-L-methionine from L-methionine: step 1/1. Its function is as follows. Catalyzes the formation of S-adenosylmethionine (AdoMet) from methionine and ATP. The overall synthetic reaction is composed of two sequential steps, AdoMet formation and the subsequent tripolyphosphate hydrolysis which occurs prior to release of AdoMet from the enzyme. This chain is S-adenosylmethionine synthase, found in Escherichia coli (strain K12 / DH10B).